The primary structure comprises 258 residues: uncharacterized protein (258 aa).

This is an uncharacterized protein from Streptococcus pneumoniae serotype 4 (strain ATCC BAA-334 / TIGR4).